The chain runs to 127 residues: MKLTILRLEHFSAQDQIDLGKIWPEYSASSLSVDETHRIYAARFNERLLGAVRVTLSGTQGALDSLRVREITRRRGVGQYLVEEVIRDNPNVSSWWMADVGVEDRSVMAAFMQALGFTAQHDGWEKR.

The region spanning 1 to 127 (MKLTILRLEH…TAQHDGWEKR (127 aa)) is the N-acetyltransferase domain. Residues 66 to 68 (LRV) and 72 to 79 (TRRRGVGQ) contribute to the CoA site.

The protein belongs to the PanZ/PanM family. In terms of assembly, interacts with PanD in the presence of CoA. Monomer.

Controls both the activation and catalytic activity of PanD in a coenzyme A (CoA)-dependent fashion. Binding of CoA or a derivative to PanM leads to interaction with PanD, which promotes the processing and activation of pro-PanD, and subsequent substrate-mediated inhibition of the active form of PanD. Lacks acetyltransferase activity. The polypeptide is PanD regulatory factor (Salmonella typhimurium (strain LT2 / SGSC1412 / ATCC 700720)).